The following is a 575-amino-acid chain: Aspartate--tRNA ligase (575 aa).

Glutamate 169 serves as a coordination point for L-aspartate. An aspartate region spans residues 193–196 (QLFK). Arginine 215 contributes to the L-aspartate binding site. ATP-binding positions include 215–217 (RDE) and glutamine 224. Histidine 438 serves as a coordination point for L-aspartate. Glutamate 472 lines the ATP pocket. Arginine 479 contacts L-aspartate. 524-527 (GLDR) lines the ATP pocket.

This sequence belongs to the class-II aminoacyl-tRNA synthetase family. Type 1 subfamily. In terms of assembly, homodimer.

Its subcellular location is the cytoplasm. It carries out the reaction tRNA(Asp) + L-aspartate + ATP = L-aspartyl-tRNA(Asp) + AMP + diphosphate. Its function is as follows. Catalyzes the attachment of L-aspartate to tRNA(Asp) in a two-step reaction: L-aspartate is first activated by ATP to form Asp-AMP and then transferred to the acceptor end of tRNA(Asp). The sequence is that of Aspartate--tRNA ligase from Mycoplasma capricolum subsp. capricolum (strain California kid / ATCC 27343 / NCTC 10154).